The following is a 576-amino-acid chain: Arginine--tRNA ligase (576 aa).

The 'HIGH' region signature appears at 126–136; the sequence is ANPTGPMHIGH.

The protein belongs to the class-I aminoacyl-tRNA synthetase family. As to quaternary structure, monomer.

It localises to the cytoplasm. It carries out the reaction tRNA(Arg) + L-arginine + ATP = L-arginyl-tRNA(Arg) + AMP + diphosphate. In Rickettsia typhi (strain ATCC VR-144 / Wilmington), this protein is Arginine--tRNA ligase.